Reading from the N-terminus, the 89-residue chain is Small ribosomal subunit protein uS15 (89 aa).

The protein belongs to the universal ribosomal protein uS15 family. As to quaternary structure, part of the 30S ribosomal subunit. Forms a bridge to the 50S subunit in the 70S ribosome, contacting the 23S rRNA.

One of the primary rRNA binding proteins, it binds directly to 16S rRNA where it helps nucleate assembly of the platform of the 30S subunit by binding and bridging several RNA helices of the 16S rRNA. Functionally, forms an intersubunit bridge (bridge B4) with the 23S rRNA of the 50S subunit in the ribosome. The protein is Small ribosomal subunit protein uS15 of Klebsiella pneumoniae (strain 342).